Reading from the N-terminus, the 379-residue chain is Beta sliding clamp (379 aa).

Belongs to the beta sliding clamp family. In terms of assembly, forms a ring-shaped head-to-tail homodimer around DNA which binds and tethers DNA polymerases and other proteins to the DNA. The DNA replisome complex has a single clamp-loading complex (3 tau and 1 each of delta, delta', psi and chi subunits) which binds 3 Pol III cores (1 core on the leading strand and 2 on the lagging strand) each with a beta sliding clamp dimer. Additional proteins in the replisome are other copies of gamma, psi and chi, Ssb, DNA helicase and RNA primase.

The protein localises to the cytoplasm. Its function is as follows. Confers DNA tethering and processivity to DNA polymerases and other proteins. Acts as a clamp, forming a ring around DNA (a reaction catalyzed by the clamp-loading complex) which diffuses in an ATP-independent manner freely and bidirectionally along dsDNA. Initially characterized for its ability to contact the catalytic subunit of DNA polymerase III (Pol III), a complex, multichain enzyme responsible for most of the replicative synthesis in bacteria; Pol III exhibits 3'-5' exonuclease proofreading activity. The beta chain is required for initiation of replication as well as for processivity of DNA replication. This is Beta sliding clamp (dnaN) from Rickettsia bellii (strain RML369-C).